A 418-amino-acid polypeptide reads, in one-letter code: Glutamyl-tRNA reductase (418 aa).

Residues 49-52 (TCNR), Ser109, 114-116 (EPQ), and Gln120 each bind substrate. The active-site Nucleophile is Cys50. Position 189–194 (189–194 (GAGETI)) interacts with NADP(+).

The protein belongs to the glutamyl-tRNA reductase family. In terms of assembly, homodimer.

It catalyses the reaction (S)-4-amino-5-oxopentanoate + tRNA(Glu) + NADP(+) = L-glutamyl-tRNA(Glu) + NADPH + H(+). The protein operates within porphyrin-containing compound metabolism; protoporphyrin-IX biosynthesis; 5-aminolevulinate from L-glutamyl-tRNA(Glu): step 1/2. Catalyzes the NADPH-dependent reduction of glutamyl-tRNA(Glu) to glutamate 1-semialdehyde (GSA). The polypeptide is Glutamyl-tRNA reductase (Escherichia fergusonii (strain ATCC 35469 / DSM 13698 / CCUG 18766 / IAM 14443 / JCM 21226 / LMG 7866 / NBRC 102419 / NCTC 12128 / CDC 0568-73)).